The sequence spans 452 residues: Exodeoxyribonuclease 7 large subunit (452 aa).

The protein belongs to the XseA family. In terms of assembly, heterooligomer composed of large and small subunits.

The protein localises to the cytoplasm. It catalyses the reaction Exonucleolytic cleavage in either 5'- to 3'- or 3'- to 5'-direction to yield nucleoside 5'-phosphates.. In terms of biological role, bidirectionally degrades single-stranded DNA into large acid-insoluble oligonucleotides, which are then degraded further into small acid-soluble oligonucleotides. This is Exodeoxyribonuclease 7 large subunit from Bacillus cereus (strain 03BB102).